The chain runs to 572 residues: Proline--tRNA ligase (572 aa).

The protein belongs to the class-II aminoacyl-tRNA synthetase family. ProS type 1 subfamily. As to quaternary structure, homodimer.

It localises to the cytoplasm. It carries out the reaction tRNA(Pro) + L-proline + ATP = L-prolyl-tRNA(Pro) + AMP + diphosphate. Functionally, catalyzes the attachment of proline to tRNA(Pro) in a two-step reaction: proline is first activated by ATP to form Pro-AMP and then transferred to the acceptor end of tRNA(Pro). As ProRS can inadvertently accommodate and process non-cognate amino acids such as alanine and cysteine, to avoid such errors it has two additional distinct editing activities against alanine. One activity is designated as 'pretransfer' editing and involves the tRNA(Pro)-independent hydrolysis of activated Ala-AMP. The other activity is designated 'posttransfer' editing and involves deacylation of mischarged Ala-tRNA(Pro). The misacylated Cys-tRNA(Pro) is not edited by ProRS. The polypeptide is Proline--tRNA ligase (Edwardsiella ictaluri (strain 93-146)).